Reading from the N-terminus, the 363-residue chain is Aminomethyltransferase (363 aa).

It belongs to the GcvT family. As to quaternary structure, the glycine cleavage system is composed of four proteins: P, T, L and H.

The catalysed reaction is N(6)-[(R)-S(8)-aminomethyldihydrolipoyl]-L-lysyl-[protein] + (6S)-5,6,7,8-tetrahydrofolate = N(6)-[(R)-dihydrolipoyl]-L-lysyl-[protein] + (6R)-5,10-methylene-5,6,7,8-tetrahydrofolate + NH4(+). Its function is as follows. The glycine cleavage system catalyzes the degradation of glycine. The chain is Aminomethyltransferase from Saccharophagus degradans (strain 2-40 / ATCC 43961 / DSM 17024).